The chain runs to 130 residues: Flagellar assembly factor FliW (130 aa).

The protein belongs to the FliW family. As to quaternary structure, interacts with translational regulator CsrA and flagellin(s).

It is found in the cytoplasm. Functionally, acts as an anti-CsrA protein, binds CsrA and prevents it from repressing translation of its target genes, one of which is flagellin. Binds to flagellin and participates in the assembly of the flagellum. In Clostridioides difficile (strain 630) (Peptoclostridium difficile), this protein is Flagellar assembly factor FliW.